The sequence spans 323 residues: uncharacterized protein (323 aa).

The S4 RNA-binding domain maps to 16-95 (QRIDQFCLKI…DKLKIIFEDE (80 aa)). D148 is an active-site residue.

The protein belongs to the pseudouridine synthase RluA family.

The catalysed reaction is a uridine in RNA = a pseudouridine in RNA. This is an uncharacterized protein from Mycoplasma genitalium (strain ATCC 33530 / DSM 19775 / NCTC 10195 / G37) (Mycoplasmoides genitalium).